The chain runs to 59 residues: Sec-independent protein translocase protein TatA 1 (59 aa).

A helical transmembrane segment spans residues 3–23 (FPLPWQLILILLVILVIFGAS).

The protein belongs to the TatA/E family. In terms of assembly, forms a complex with TatC.

It localises to the cell inner membrane. Its function is as follows. Part of the twin-arginine translocation (Tat) system that transports large folded proteins containing a characteristic twin-arginine motif in their signal peptide across membranes. TatA could form the protein-conducting channel of the Tat system. The chain is Sec-independent protein translocase protein TatA 1 from Aquifex aeolicus (strain VF5).